Consider the following 253-residue polypeptide: Coenzyme F420:L-glutamate ligase (253 aa).

GTP contacts are provided by residues 9 to 12 (LPEI), 38 to 39 (ST), and lysine 43. A divalent metal cation is bound at residue aspartate 113. Asparagine 116 is a GTP binding site. Positions 150, 151, and 208 each coordinate a divalent metal cation. 206 to 213 (SGEGDDGT) contacts GTP.

The protein belongs to the CofE family. In terms of assembly, homodimer. Mg(2+) is required as a cofactor. Mn(2+) serves as cofactor. Requires K(+) as cofactor.

The catalysed reaction is oxidized coenzyme F420-0 + GTP + L-glutamate = oxidized coenzyme F420-1 + GDP + phosphate + H(+). The enzyme catalyses oxidized coenzyme F420-1 + GTP + L-glutamate = oxidized coenzyme F420-2 + GDP + phosphate + H(+). It participates in cofactor biosynthesis; coenzyme F420 biosynthesis. In terms of biological role, catalyzes the GTP-dependent successive addition of two or more gamma-linked L-glutamates to the L-lactyl phosphodiester of 7,8-didemethyl-8-hydroxy-5-deazariboflavin (F420-0) to form coenzyme F420-0-glutamyl-glutamate (F420-2) or polyglutamated F420 derivatives. This Halobacterium salinarum (strain ATCC 29341 / DSM 671 / R1) protein is Coenzyme F420:L-glutamate ligase.